The primary structure comprises 117 residues: Big defensin (117 aa).

Positions 1 to 23 are cleaved as a signal peptide; the sequence is MEKKTAYCLLFLVLLVPYTALGA. Positions 24–33 are excised as a propeptide; the sequence is VLKRAPAKKE. Disulfide bonds link Cys82–Cys112, Cys89–Cys107, and Cys93–Cys113.

The protein belongs to the big defensin family.

The protein localises to the secreted. Functionally, significantly inhibits the growth of Gram-negative and Gram-positive bacteria and fungi in vitro. The sequence is that of Big defensin from Branchiostoma belcheri (Amphioxus).